Reading from the N-terminus, the 697-residue chain is Histone-lysine N-methyltransferase SETDB2 (697 aa).

In terms of domain architecture, MBD spans 172 to 242 (LKKENPLNLP…DNFSFSTQVQ (71 aa)). Residues 304–378 (KCCSCTDGCL…LCQNRVVQHG (75 aa)) enclose the Pre-SET domain. Zn(2+) is bound by residues C306, C308, C312, C318, C320, C359, C363, C365, and C370. One can recognise an SET domain in the interval 381-672 (LRLQVFKTDT…AGTELTWDYN (292 aa)). Residue 391–393 (KGW) participates in S-adenosyl-L-methionine binding. Disordered regions lie at residues 438–461 (KEDN…HSDS) and 529–605 (VHNS…STSP). Positions 565 to 581 (SGYVSEESSSSVISGGH) are enriched in low complexity. S-adenosyl-L-methionine-binding positions include R626 and 629-630 (NH). Zn(2+) is bound by residues C632, C685, C687, and C692.

This sequence belongs to the class V-like SAM-binding methyltransferase superfamily.

It is found in the nucleus. The protein resides in the chromosome. It catalyses the reaction N(6),N(6)-dimethyl-L-lysyl(9)-[histone H3] + S-adenosyl-L-methionine = N(6),N(6),N(6)-trimethyl-L-lysyl(9)-[histone H3] + S-adenosyl-L-homocysteine + H(+). Functionally, histone methyltransferase involved in left-right axis specification in early development and mitosis. Specifically trimethylates 'Lys-9' of histone H3 (H3K9me3). H3K9me3 represents a specific tag for epigenetic transcriptional repression by recruiting HP1 (CBX1, CBX3 and/or CBX5) proteins to methylated histones. Contributes to H3K9me3 in both the interspersed repetitive elements and centromere-associated repeats. Plays a role in chromosome condensation and segregation during mitosis. This is Histone-lysine N-methyltransferase SETDB2 (setdb2) from Xenopus tropicalis (Western clawed frog).